Consider the following 887-residue polypeptide: Cytoplasmic aconitate hydratase (887 aa).

Substrate contacts are provided by residues Gln-84 and 204-206 (DSH). Cys-436, Cys-502, and Cys-505 together coordinate [4Fe-4S] cluster. Residues Arg-535, Arg-540, Arg-697, and 777-778 (SR) each bind substrate.

It belongs to the aconitase/IPM isomerase family. As to quaternary structure, interacts with gex-3. It depends on [4Fe-4S] cluster as a cofactor.

Its subcellular location is the cytoplasm. It localises to the cytosol. It catalyses the reaction citrate = D-threo-isocitrate. Catalyzes the isomerization of citrate to isocitrate via cis-aconitate. Has probably no RNA-binding activity. The sequence is that of Cytoplasmic aconitate hydratase (aco-1) from Caenorhabditis elegans.